A 727-amino-acid chain; its full sequence is Rho-related BTB domain-containing protein 2 (727 aa).

The interval 1 to 210 (MDSDMDYERP…DNAIRAALIS (210 aa)) is rho-like. GTP is bound by residues 21-28 (GDNAVGKT), 84-88 (DTFGD), and 140-143 (CQLD). 2 BTB domains span residues 266–442 (ADVI…DENE) and 500–567 (SDVT…TSSP). Positions 304–333 (ELGGPSEPGGTHPEDHQGHSDQHHHHHHHH) are disordered. A compositionally biased stretch (basic and acidic residues) spans 315 to 324 (HPEDHQGHSD). The interval 703 to 727 (FWNSPSSPSSSAASSSSPSSSSAVV) is disordered. A compositionally biased stretch (low complexity) spans 706–727 (SPSSPSSSAASSSSPSSSSAVV).

Belongs to the small GTPase superfamily. Rho family. In terms of assembly, interacts with HSP90AA1 and HSP90AB1. Forms a complex with CUL3 and RBX1. Interacts (via BTB 1 domain) with CUL3. Interacts with MSI2. Post-translationally, autoubiquitinated by RHOBTB2-CUL3-RBX1 ubiquitin ligase complex. Ubiquitous, with highest levels in neural tissues. Expression is also detected in fetal lung, heart, and brain.

Functionally, regulator of cell proliferation and apoptosis. It likely functions as a substrate-adapter that recruits key substrates, e.g. MSI2, to CUL3-based ubiquitin ligase complexes for degradation. Required for MSI2 ubiquitination and degradation. In Homo sapiens (Human), this protein is Rho-related BTB domain-containing protein 2 (RHOBTB2).